The sequence spans 380 residues: Cytochrome b (380 aa).

Transmembrane regions (helical) follow at residues 34–54 (FGSLLALCLMTQILTGLLLAM), 78–99 (WLIRNMHANGASFFFICIYLHI), 114–134 (WNTGVLLLLTLMATAFVGYVL), and 179–199 (FFALHFLLPFMIAGLTLIHLT). Positions 84 and 98 each coordinate heme b. The heme b site is built by histidine 183 and histidine 197. Histidine 202 provides a ligand contact to a ubiquinone. 4 helical membrane-spanning segments follow: residues 227 to 247 (LKDILGLALLLLPLTTMALFS), 289 to 309 (LGGVLALAASVLVLFLSPLLH), 321 to 341 (LSQLLFWALVANLLILTWIGS), and 348 to 368 (FIIIGQLASTTYFIILLILFP).

The protein belongs to the cytochrome b family. As to quaternary structure, the cytochrome bc1 complex contains 11 subunits: 3 respiratory subunits (MT-CYB, CYC1 and UQCRFS1), 2 core proteins (UQCRC1 and UQCRC2) and 6 low-molecular weight proteins (UQCRH/QCR6, UQCRB/QCR7, UQCRQ/QCR8, UQCR10/QCR9, UQCR11/QCR10 and a cleavage product of UQCRFS1). This cytochrome bc1 complex then forms a dimer. It depends on heme b as a cofactor.

The protein resides in the mitochondrion inner membrane. Functionally, component of the ubiquinol-cytochrome c reductase complex (complex III or cytochrome b-c1 complex) that is part of the mitochondrial respiratory chain. The b-c1 complex mediates electron transfer from ubiquinol to cytochrome c. Contributes to the generation of a proton gradient across the mitochondrial membrane that is then used for ATP synthesis. This Oceanodroma microsoma (Least storm petrel) protein is Cytochrome b (MT-CYB).